Here is a 194-residue protein sequence, read N- to C-terminus: Adenylate kinase (194 aa).

Position 8–16 (8–16 (GIPGVGKST)) interacts with ATP.

The protein belongs to the archaeal adenylate kinase family. In terms of assembly, homotrimer.

It localises to the cytoplasm. It catalyses the reaction AMP + ATP = 2 ADP. The polypeptide is Adenylate kinase (adkA) (Sulfolobus acidocaldarius (strain ATCC 33909 / DSM 639 / JCM 8929 / NBRC 15157 / NCIMB 11770)).